The chain runs to 429 residues: Adenylosuccinate synthetase (429 aa).

Residues 12 to 18 (GDEGKGK) and 40 to 42 (GHT) each bind GTP. Catalysis depends on aspartate 13, which acts as the Proton acceptor. Residues aspartate 13 and glycine 40 each contribute to the Mg(2+) site. IMP contacts are provided by residues 13–16 (DEGK), 38–41 (NAGH), threonine 129, arginine 143, glutamine 223, threonine 238, and arginine 302. Catalysis depends on histidine 41, which acts as the Proton donor. 298-304 (TVTGRRR) provides a ligand contact to substrate. GTP-binding positions include arginine 304, 330–332 (KLD), and 412–414 (STS).

The protein belongs to the adenylosuccinate synthetase family. As to quaternary structure, homodimer. Mg(2+) serves as cofactor.

The protein resides in the cytoplasm. The enzyme catalyses IMP + L-aspartate + GTP = N(6)-(1,2-dicarboxyethyl)-AMP + GDP + phosphate + 2 H(+). It functions in the pathway purine metabolism; AMP biosynthesis via de novo pathway; AMP from IMP: step 1/2. Its function is as follows. Plays an important role in the de novo pathway of purine nucleotide biosynthesis. Catalyzes the first committed step in the biosynthesis of AMP from IMP. The sequence is that of Adenylosuccinate synthetase from Zymomonas mobilis subsp. mobilis (strain ATCC 31821 / ZM4 / CP4).